A 413-amino-acid chain; its full sequence is Palmitoyltransferase ZDHHC6 (413 aa).

At 1-24 (MGIFCSVIKFENLQDLRRLCHWGP) the chain is on the cytoplasmic side. A helical membrane pass occupies residues 25–45 (IIALGVIAICSTMAMIDSVLW). The Lumenal portion of the chain corresponds to 46-57 (YWPLHTTGGSVN). The chain crosses the membrane as a helical span at residues 58-78 (FIMLINWTVMILYNYFNAMFA). Topologically, residues 79-143 (GPGFVPRGWK…NCCGHQNHAS (65 aa)) are cytoplasmic. The DHHC domain occupies 99–149 (QYCKVCQAYKAPRSHHCRKCNRCVMKMDHHCPWINNCCGHQNHASFTLFLL). Catalysis depends on Cys129, which acts as the S-palmitoyl cysteine intermediate. Residues 144-164 (FTLFLLLAPLGCTHAAFIFVM) form a helical membrane-spanning segment. At 165–194 (TMYTQLYNRLSFGWNTVKIDMSAARRDPPP) the chain is on the lumenal side. A helical membrane pass occupies residues 195 to 215 (IVPFGLAAFAATLFALGLALG). Residues 216–413 (TTIAVGMLFF…PAPEGEKKNR (198 aa)) are Cytoplasmic-facing. The region spanning 313-398 (VRSVRYKVIE…PRNCVEKCPC (86 aa)) is the SH3 domain. Residues Cys328, Cys329, and Cys343 are each lipidated (S-palmitoyl cysteine). The Di-lysine motif signature appears at 410–413 (KKNR).

The protein belongs to the DHHC palmitoyltransferase family. As to quaternary structure, homooligomerizes. Interacts with SELENOK. Post-translationally, palmitoylated at 3 different sites by ZDHHC16. The combination of the different palmitoylation events strongly affects the quaternary assembly of ZDHHC6, its localization, stability and function. Palmitoylation at Cys-328 accelerates the turnover of ZDHHC6. Depalmitoylated by LYPLA2.

Its subcellular location is the endoplasmic reticulum membrane. It catalyses the reaction L-cysteinyl-[protein] + hexadecanoyl-CoA = S-hexadecanoyl-L-cysteinyl-[protein] + CoA. The enzyme catalyses L-cysteinyl-[protein] + octadecanoyl-CoA = S-octadecanoyl-L-cysteinyl-[protein] + CoA. In terms of biological role, endoplasmic reticulum palmitoyl acyltransferase that mediates palmitoylation of proteins such as AMFR, CALX, ITPR1 and TFRC. Palmitoylates calnexin (CALX), which is required for its association with the ribosome-translocon complex and efficient folding of glycosylated proteins. Mediates palmitoylation of AMFR, promoting AMFR distribution to the peripheral endoplasmic reticulum. Together with SELENOK, palmitoylates ITPR1 in immune cells, leading to regulate ITPR1 stability and function. Stearoyltransferase that mediates stearoylation of TFRC to inhibit TFRC-mediated activation of the JNK pathway and mitochondrial fragmentation. The sequence is that of Palmitoyltransferase ZDHHC6 from Mus musculus (Mouse).